A 433-amino-acid polypeptide reads, in one-letter code: Putative ankyrin repeat protein R578 (433 aa).

ANK repeat units follow at residues Asn-166–Glu-195, Asp-197–Leu-224, Val-356–Ser-386, and Pro-388–Glu-415.

The sequence is that of Putative ankyrin repeat protein R578 from Acanthamoeba polyphaga mimivirus (APMV).